Consider the following 34-residue polypeptide: uncharacterized protein (34 aa).

Over residues 1–12 the composition is skewed to basic and acidic residues; sequence MFSHFEVSENRP. The interval 1–21 is disordered; sequence MFSHFEVSENRPRKQPRRKRI.

This is an uncharacterized protein from Saccharomyces cerevisiae (strain ATCC 204508 / S288c) (Baker's yeast).